A 208-amino-acid chain; its full sequence is Uracil phosphoribosyltransferase (208 aa).

Residues Arg78, Arg103, and 130–138 (DPMLATGGS) contribute to the 5-phospho-alpha-D-ribose 1-diphosphate site. Residues Ile193 and 198-200 (GDA) each bind uracil. Position 199 (Asp199) interacts with 5-phospho-alpha-D-ribose 1-diphosphate.

It belongs to the UPRTase family. Requires Mg(2+) as cofactor.

It carries out the reaction UMP + diphosphate = 5-phospho-alpha-D-ribose 1-diphosphate + uracil. Its pathway is pyrimidine metabolism; UMP biosynthesis via salvage pathway; UMP from uracil: step 1/1. Allosterically activated by GTP. In terms of biological role, catalyzes the conversion of uracil and 5-phospho-alpha-D-ribose 1-diphosphate (PRPP) to UMP and diphosphate. This chain is Uracil phosphoribosyltransferase, found in Pelobacter propionicus (strain DSM 2379 / NBRC 103807 / OttBd1).